Here is a 188-residue protein sequence, read N- to C-terminus: Peptidyl-tRNA hydrolase (188 aa).

Y18 contributes to the tRNA binding site. H23 functions as the Proton acceptor in the catalytic mechanism. TRNA is bound by residues Y67, N69, and N115.

This sequence belongs to the PTH family. As to quaternary structure, monomer.

It is found in the cytoplasm. It carries out the reaction an N-acyl-L-alpha-aminoacyl-tRNA + H2O = an N-acyl-L-amino acid + a tRNA + H(+). Its function is as follows. Hydrolyzes ribosome-free peptidyl-tRNAs (with 1 or more amino acids incorporated), which drop off the ribosome during protein synthesis, or as a result of ribosome stalling. In terms of biological role, catalyzes the release of premature peptidyl moieties from peptidyl-tRNA molecules trapped in stalled 50S ribosomal subunits, and thus maintains levels of free tRNAs and 50S ribosomes. The polypeptide is Peptidyl-tRNA hydrolase (Salinibacter ruber (strain DSM 13855 / M31)).